The chain runs to 74 residues: Guanine nucleotide-binding protein G(T) subunit gamma-T1 (74 aa).

At Cys-71 the chain carries Cysteine methyl ester. Cys-71 carries the S-farnesyl cysteine lipid modification. Residues Val-72–Ser-74 constitute a propeptide, removed in mature form.

Belongs to the G protein gamma family. G proteins are composed of 3 units, alpha, beta and gamma. As to expression, retinal rod outer segment.

The protein resides in the cell membrane. Functionally, guanine nucleotide-binding proteins (G proteins) are involved as a modulator or transducer in various transmembrane signaling systems. The beta and gamma chains are required for the GTPase activity, for replacement of GDP by GTP, and for G protein-effector interaction. The protein is Guanine nucleotide-binding protein G(T) subunit gamma-T1 (Gngt1) of Mus musculus (Mouse).